A 175-amino-acid polypeptide reads, in one-letter code: Vitamin K epoxide reductase complex subunit 1-like protein 1 (175 aa).

Over 1–12 (MAAPVLRVSTPR) the chain is Cytoplasmic. The helical transmembrane segment at 13–35 (WERIARVLVCLLGILLSLYAFHV) threads the bilayer. The Lumenal segment spans residues 36–86 (EREHARDPSYKALCDVSSSISCSKVFGSRWGRGFGLLGSIFGNDSALNQPN). A disulfide bond links Cys49 and Cys57. Asn86 provides a ligand contact to (S)-warfarin. A helical transmembrane segment spans residues 87 to 101 (SVYGIVFYAFQLLLG). At 102–106 (MTVSA) the chain is on the cytoplasmic side. The helical transmembrane segment at 107–134 (MAALILMTTSIMSVVGSLYLGYILYFVL) threads the bilayer. At 135 to 137 (KDL) the chain is on the lumenal side. Cysteines 138 and 141 form a disulfide. The helical transmembrane segment at 138–159 (CVICVTTYALNFILFVLNYKRL) threads the bilayer. Residues Cys141 and Tyr145 each contribute to the phylloquinone site. Position 145 (Tyr145) interacts with (S)-warfarin. The Cytoplasmic segment spans residues 160–175 (VYLNEAWKQKLQAKQD).

The protein belongs to the VKOR family.

It localises to the endoplasmic reticulum membrane. The enzyme catalyses phylloquinone + [protein]-disulfide + H2O = 2,3-epoxyphylloquinone + [protein]-dithiol. It carries out the reaction phylloquinol + [protein]-disulfide = phylloquinone + [protein]-dithiol. Its activity is regulated as follows. Inhibited by warfarin (coumadin). Warfarin locks VKORC1 in both redox states into the closed conformation. In terms of biological role, involved in vitamin K metabolism. Can reduce inactive vitamin K 2,3-epoxide to active vitamin K, and may contribute to vitamin K-mediated protection against oxidative stress. Plays a role in vitamin K-dependent gamma-carboxylation of Glu residues in target proteins. The sequence is that of Vitamin K epoxide reductase complex subunit 1-like protein 1 (vkorc1l1) from Takifugu rubripes (Japanese pufferfish).